Reading from the N-terminus, the 409-residue chain is NADH-quinone oxidoreductase subunit D (409 aa).

This sequence belongs to the complex I 49 kDa subunit family. NDH-1 is composed of 14 different subunits. Subunits NuoB, C, D, E, F, and G constitute the peripheral sector of the complex.

It is found in the cell inner membrane. It catalyses the reaction a quinone + NADH + 5 H(+)(in) = a quinol + NAD(+) + 4 H(+)(out). NDH-1 shuttles electrons from NADH, via FMN and iron-sulfur (Fe-S) centers, to quinones in the respiratory chain. The immediate electron acceptor for the enzyme in this species is believed to be ubiquinone. Couples the redox reaction to proton translocation (for every two electrons transferred, four hydrogen ions are translocated across the cytoplasmic membrane), and thus conserves the redox energy in a proton gradient. This Thermus thermophilus (strain ATCC BAA-163 / DSM 7039 / HB27) protein is NADH-quinone oxidoreductase subunit D (nuoD).